The primary structure comprises 507 residues: Efflux pump ustT (507 aa).

Helical transmembrane passes span 59–79, 146–166, 180–200, 216–236, 240–260, 316–336, 359–379, 398–418, 421–441, 449–469, and 481–501; these read IAVV…IIVA, LLIA…VTWF, IWQL…AMIA, HAAV…LANF, IPVF…YVVV, VLLI…SGIT, AGVN…ILVK, VCLI…TLVF, TVFA…TGMV, VFTG…PMLA, and IWVG…LGAI.

It belongs to the major facilitator superfamily.

It is found in the cell membrane. It functions in the pathway mycotoxin biosynthesis. Its function is as follows. Efflux pump; part of the gene cluster that mediates the biosynthesis of the secondary metabolite ustiloxin B, an antimitotic tetrapeptide. Probably involved in self-resistance through the export of ustiloxin B. The sequence is that of Efflux pump ustT from Aspergillus flavus (strain ATCC 200026 / FGSC A1120 / IAM 13836 / NRRL 3357 / JCM 12722 / SRRC 167).